Consider the following 726-residue polypeptide: Transmembrane channel-like protein 8 (726 aa).

The Cytoplasmic portion of the chain corresponds to 1-114 (MLLPRSVSSE…GIRSYFTFLR (114 aa)). Residue S6 is modified to Phosphoserine. The chain crosses the membrane as a helical span at residues 115–135 (FLLLLNLLSLLLTASFVLLPL). The Lumenal segment spans residues 136-200 (VWLRPPDPGP…VGPESSSVYS (65 aa)). The N-linked (GlcNAc...) asparagine glycan is linked to N148. The chain crosses the membrane as a helical span at residues 201-221 (IRLAYLLSPLACLLLCFCGTL). The Cytoplasmic portion of the chain corresponds to 222–299 (RRMVKGLPQK…AQTACRLLSY (78 aa)). Residues 300–320 (LRVNVLNGLLVVGAISAIFWA) form a helical membrane-spanning segment. At 321 to 338 (TKYSQDNKEESLFLLLQY) the chain is on the lumenal side. The chain crosses the membrane as a helical span at residues 339 to 359 (LPPGVIALVNFLGPLLFTFLV). The Cytoplasmic segment spans residues 360-426 (QLENYPPNTE…QCWENSVGEE (67 aa)). Positions 362-530 (ENYPPNTEVN…SSRPFRASSS (169 aa)) are TMC domain. A helical transmembrane segment spans residues 427–447 (LYKLSIFNFLLTVAFAFLVTL). At 448-488 (PRRLLVDRFSGRFWAWLEREEFLVPKNVLDIVAGQTVTWMG) the chain is on the lumenal side. Residues 489–509 (LFYCPLLPLLNSVFLFLTFYI) form a helical membrane-spanning segment. Over 510–531 (KKYTLLKNSRASSRPFRASSST) the chain is Cytoplasmic. The helical transmembrane segment at 532–552 (FFFQLVLLLGLLLAAVPLGYV) threads the bilayer. At 553–594 (VSSIHSSWDCGLFTNYSAPWQVVPELVALGLPPIGQRALHYL) the chain is on the lumenal side. The N-linked (GlcNAc...) asparagine glycan is linked to N567. A helical transmembrane segment spans residues 595–615 (GSHAFSFPLLIMLSLVLTVCV). The Cytoplasmic portion of the chain corresponds to 616–726 (SQTQANARAI…RFRFPSGAEL (111 aa)). Positions 651-726 (PEPGPSDSPG…RFRFPSGAEL (76 aa)) are disordered. Positions 652 to 662 (EPGPSDSPGPK) are enriched in pro residues. 2 positions are modified to phosphoserine: S658 and S673.

Belongs to the TMC family. In terms of assembly, interacts with TMC6. Interacts and forms a complex with TMC6 and CIB1; the interaction stabilizes each component of the complex. Interacts and forms a complex with TMC6 and SLC30A1/ZNT1; the interaction regulates zinc transport into the ER. Interacts with TRADD; the interaction competes with TRADD/RIPK1/TRAF2/cIAPs complex I formation and facilites complex II formation. As to quaternary structure, (Microbial infection) Interacts with human papillomavirus 16/HPV16 protein E5; the interaction alleviates TMC8-mediated transcription factors inhibition. As to expression, expressed in placenta, prostate and testis.

The protein localises to the endoplasmic reticulum membrane. It is found in the golgi apparatus membrane. Its subcellular location is the nucleus membrane. Functionally, acts as a regulatory protein involved in the regulation of numerous cellular processes. Together with its homolog TMC6/EVER1, forms a complex with calcium-binding protein CIB1 in lymphocytes and keratynocytes where TMC6 and TMC8 stabilize CIB1 levels and reciprocally. Together with TMC6, also forms a complex with and activates zinc transporter ZNT1 at the ER membrane of keratynocytes, thereby facilitating zinc uptake into the ER. Also inhibits receptor-mediated calcium release from ER stores and calcium activated and volume regulated chloride channels. Down-regulates the activity of transcription factors induced by zinc and cytokines. Also sequesters TRADD which impairs the recruitment of TRAF2 and RIPK1 in the pro-survival complex I and promotes proapoptotic complex II formation, and may therefore be involved in TNF-induced cell death/survival decisions. In Homo sapiens (Human), this protein is Transmembrane channel-like protein 8.